The chain runs to 181 residues: Adenine phosphoribosyltransferase (181 aa).

The protein belongs to the purine/pyrimidine phosphoribosyltransferase family. Homodimer.

Its subcellular location is the cytoplasm. It catalyses the reaction AMP + diphosphate = 5-phospho-alpha-D-ribose 1-diphosphate + adenine. It participates in purine metabolism; AMP biosynthesis via salvage pathway; AMP from adenine: step 1/1. Its function is as follows. Catalyzes a salvage reaction resulting in the formation of AMP, that is energically less costly than de novo synthesis. The chain is Adenine phosphoribosyltransferase from Rhodopseudomonas palustris (strain BisB5).